The sequence spans 119 residues: Large ribosomal subunit protein bL20 (119 aa).

This sequence belongs to the bacterial ribosomal protein bL20 family.

Binds directly to 23S ribosomal RNA and is necessary for the in vitro assembly process of the 50S ribosomal subunit. It is not involved in the protein synthesizing functions of that subunit. The polypeptide is Large ribosomal subunit protein bL20 (Delftia acidovorans (strain DSM 14801 / SPH-1)).